The primary structure comprises 226 residues: Neuromodulin (226 aa).

The segment at 1-226 (MLCCMRRTKQ…EDPEADQEHA (226 aa)) is disordered. 2 S-palmitoyl cysteine lipidation sites follow: Cys-3 and Cys-4. Basic and acidic residues predominate over residues 9 to 32 (KQVEKNDEDQKIEQDGVKPEDKAH). An IQ domain is found at 31 to 60 (AHKAATKIQASFRGHITRKKLKDEKKGDAP). Ser-41 is modified (phosphoserine; by PHK and PKC). Basic and acidic residues predominate over residues 51 to 84 (LKDEKKGDAPAAEAEAKEKDDAPVADGVEKKEGD). A compositionally biased stretch (low complexity) spans 85–97 (GSATTDAAPATSP). Residues Ser-86 and Ser-96 each carry the phosphoserine modification. The span at 98–127 (KAEEPSKAGDAPSEEKKGEGDAAPSEEKAG) shows a compositional bias: basic and acidic residues. A compositionally biased stretch (low complexity) spans 128–139 (SAETESAAKATT). Phosphoserine is present on residues Ser-142, Ser-144, and Ser-145. The span at 146–158 (KAEDGPAKEEPKQ) shows a compositional bias: basic and acidic residues. Residues 159-192 (ADVPAAVTDAAATTPAAEDAAKAAQPPTETAESS) are compositionally biased toward low complexity. Thr-172 carries the post-translational modification Phosphothreonine. A phosphoserine mark is found at Ser-191 and Ser-192. Positions 201–214 (VDEAKPKESARQDE) are enriched in basic and acidic residues. The segment covering 215-226 (GKEDPEADQEHA) has biased composition (acidic residues).

The protein belongs to the neuromodulin family. Identified in a complex containing FGFR4, NCAM1, CDH2, PLCG1, FRS2, SRC, SHC1, GAP43 and CTTN. Interacts (via IQ domain) with calmodulin. Binds calmodulin with a greater affinity in the absence of Ca(2+) than in its presence. Phosphorylated. Phosphorylation of this protein by a protein kinase C is specifically correlated with certain forms of synaptic plasticity. Post-translationally, palmitoylated by ZDHHC3. Palmitoylation is regulated by ARF6 and is essential for plasma membrane association and axonal and dendritic filopodia induction. Deacylated by LYPLA2. In terms of tissue distribution, expressed in hippocampal neurons, with highest levels of expression in the CA4 and CA3 neurons and lower levels in CA1 neurons. Expressed in the dorsal root ganglion.

It is found in the cell membrane. It localises to the cell projection. The protein localises to the growth cone. The protein resides in the growth cone membrane. Its subcellular location is the synapse. It is found in the filopodium membrane. It localises to the perikaryon. The protein localises to the dendrite. The protein resides in the axon. Its subcellular location is the cytoplasm. In terms of biological role, this protein is associated with nerve growth. It is a major component of the motile 'growth cones' that form the tips of elongating axons. Plays a role in axonal and dendritic filopodia induction. The protein is Neuromodulin (Gap43) of Rattus norvegicus (Rat).